The chain runs to 652 residues: Aorsin (652 aa).

Positions 1–22 (MRPLSHLSFFNGLLLGLSALSA) are cleaved as a signal peptide. Residues 23-215 (ATSVVHERRE…PRPIQQHDVK (193 aa)) constitute a propeptide, removed in mature form. Asparagine 112 is a glycosylation site (N-linked (GlcNAc...) asparagine). The interval 177–211 (VNLNPSSGKPSSIRRRAAASKKTKLPARGPRPIQQ) is disordered. A compositionally biased stretch (basic residues) spans 188–201 (SIRRRAAASKKTKL). Residues asparagine 218 and asparagine 247 are each glycosylated (N-linked (GlcNAc...) asparagine). Positions 225–651 (LITPECIRAL…PKMLKLWLDL (427 aa)) constitute a Peptidase S53 domain. Active-site charge relay system residues include glutamate 301 and aspartate 305. N-linked (GlcNAc...) asparagine glycans are attached at residues asparagine 331 and asparagine 445. Serine 569 functions as the Charge relay system in the catalytic mechanism. Ca(2+) contacts are provided by aspartate 610 and isoleucine 611. N-linked (GlcNAc...) asparagine glycosylation is present at asparagine 613. Ca(2+)-binding residues include glycine 629 and aspartate 631.

The cofactor is Ca(2+). Post-translationally, N-glycosylated. In terms of processing, O-glycosylated.

The protein localises to the secreted. Its subcellular location is the extracellular space. Inhibited by antipain and leupeptin. In terms of biological role, serine endopeptidase which hydrolyzes a range of fluorogenic peptide substrates containing the basic residues arginine or lysine at the P1 position and prefers paired basic resides. Also hydrolyzes clupeine and salmine, activates plasminogen and converts trypsinogen to trypsin. This Aspergillus oryzae (strain ATCC 42149 / RIB 40) (Yellow koji mold) protein is Aorsin.